The following is a 161-amino-acid chain: Nucleotide-binding protein Sama_2557 (161 aa).

Belongs to the YajQ family.

Nucleotide-binding protein. The protein is Nucleotide-binding protein Sama_2557 of Shewanella amazonensis (strain ATCC BAA-1098 / SB2B).